We begin with the raw amino-acid sequence, 107 residues long: UPF0060 membrane protein M446_5886 (107 aa).

4 helical membrane-spanning segments follow: residues 4-24 (LLAYALAALAEIAGCFAIWAW), 31-51 (PLWLGPGLASLILFAVLLTRV), 59-79 (AYAAYGGVYVAASLLWLWAAE), and 85-105 (RWDLGGAALCLAGSAVVLLGP).

Belongs to the UPF0060 family.

Its subcellular location is the cell inner membrane. This chain is UPF0060 membrane protein M446_5886, found in Methylobacterium sp. (strain 4-46).